The following is a 229-amino-acid chain: Sugar fermentation stimulation protein homolog (229 aa).

This sequence belongs to the SfsA family.

The chain is Sugar fermentation stimulation protein homolog from Caldanaerobacter subterraneus subsp. tengcongensis (strain DSM 15242 / JCM 11007 / NBRC 100824 / MB4) (Thermoanaerobacter tengcongensis).